Consider the following 468-residue polypeptide: Zinc finger protein mex-5 (468 aa).

Residues 1 to 19 (MKAASNSVSSAGGSVSPTT) are compositionally biased toward low complexity. Positions 1–32 (MKAASNSVSSAGGSVSPTTTQPPLPPGQSSHP) are disordered. The residue at position 186 (Thr186) is a Phosphothreonine; by mbk-2. A compositionally biased stretch (basic and acidic residues) spans 243 to 254 (NHFHEHRGEKFG). A disordered region spans residues 243-269 (NHFHEHRGEKFGRRGFPIPETDSQQPP). C3H1-type zinc fingers lie at residues 270–299 (NYKTRLCMMHASGIKPCDMGARCKFAHGLK) and 314–344 (KYKTKLCKNFARGGTGFCPYGLRCEFVHPTD). Residues 414–468 (DLQAGGDYNQPESNEDDLPPHLRRNRRENPPMNKRRTSLSTKWTSEENLGLRGHY) are disordered. The segment covering 451–460 (SLSTKWTSEE) has biased composition (polar residues). Position 458 is a phosphoserine (Ser458).

As to quaternary structure, interacts (when phosphorylated on Thr-186) with plk-1 (via POLO box domain) and plk-2 (via POLO box domain). Phosphorylation on Ser-458 by par-1 promotes localization of the protein to the anterior cytoplasm of the zygote. Phosphorylation by mbk-1 appears to be required for subsequent phosphorylation by plk-1. As to expression, asymmetrically localized to the anterior of the zygote before mitotic division, then differentially distributed to the somatic blastomere precursor cells.

Its subcellular location is the cytoplasm. Its function is as follows. Functions with mex-6 to affect embryonic viability, establish soma germline asymmetry in embryos and establish plk-1, pie-1, mex-1, and pos-1 asymmetry in embryos. Also affects formation of intestinal cells. Binds to mRNA in vitro, and inhibits pgl-3-mediated P-granule formation, probably by competing with pgl-3 for binding to mRNA. Required for neg-1 expression in anterior blastomeres during embryogenesis. The chain is Zinc finger protein mex-5 from Caenorhabditis elegans.